Consider the following 439-residue polypeptide: Hydroxyornithine transacylase SID3 (439 aa).

The short motif at 437 to 439 is the PTS1-type peroxisomal targeting signal element; the sequence is SKL.

This sequence belongs to the lysine N-acyltransferase mbtK family.

It is found in the peroxisome. The protein operates within siderophore biosynthesis. Functionally, hydroxyornithine transacylase; part of the gene cluster that mediates the biosynthesis of hydroxamate-containing siderophores that play a critical role in virulence via intracellular iron acquisition during macrophage infection. The protein is Hydroxyornithine transacylase SID3 of Ajellomyces capsulatus (Darling's disease fungus).